Here is a 147-residue protein sequence, read N- to C-terminus: Urease accessory protein UreE (147 aa).

The protein belongs to the UreE family.

It localises to the cytoplasm. Involved in urease metallocenter assembly. Binds nickel. Probably functions as a nickel donor during metallocenter assembly. The polypeptide is Urease accessory protein UreE (Marinomonas sp. (strain MWYL1)).